Reading from the N-terminus, the 442-residue chain is Chitinase-like protein Idgf4 (442 aa).

The first 21 residues, 1-21, serve as a signal peptide directing secretion; the sequence is MKLYALFSLLVGSLAIGQISA. A GH18 domain is found at 25–442; sequence HHLLCYYDGN…PILRQVKSKL (418 aa). An intrachain disulfide couples C29 to C56. N224 is a glycosylation site (N-linked (GlcNAc...) asparagine). A disulfide bond links C343 and C426.

This sequence belongs to the glycosyl hydrolase 18 family. IDGF subfamily. Post-translationally, glycosylated. Primarily expressed in yolk cells and fat body. In larvae, it is expressed in the imaginal ring, the salivary duct, large salivary gland cells and weakly expressed in imaginal disks. More strongly expressed than Idgf1 and Idgf3.

Its subcellular location is the secreted. Cooperates with insulin-like peptides to stimulate the proliferation, polarization and motility of imaginal disk cells. May act by stabilizing the binding of insulin-like peptides to its receptor through a simultaneous interaction with both molecules to form a multiprotein signaling complex. The chain is Chitinase-like protein Idgf4 (Idgf4) from Drosophila melanogaster (Fruit fly).